Here is a 218-residue protein sequence, read N- to C-terminus: Thiopurine S-methyltransferase (218 aa).

S-adenosyl-L-methionine is bound by residues Trp-10, Leu-45, Glu-66, and Arg-123.

The protein belongs to the class I-like SAM-binding methyltransferase superfamily. TPMT family.

The protein localises to the cytoplasm. It catalyses the reaction S-adenosyl-L-methionine + a thiopurine = S-adenosyl-L-homocysteine + a thiopurine S-methylether.. The protein is Thiopurine S-methyltransferase of Pseudomonas paraeruginosa (strain DSM 24068 / PA7) (Pseudomonas aeruginosa (strain PA7)).